Reading from the N-terminus, the 253-residue chain is Neurotrophin-3 (253 aa).

A signal peptide spans 1–18; sequence MSILFYVMFLAYLRGVQG. A propeptide spanning residues 19–134 is cleaved from the precursor; it reads NSMDQRSLPE…AANRTSRRKR (116 aa). A disordered region spans residues 62 to 89; it reads TLPKAEAPPREPAKSEFQPVTAMGPELL. N127 carries an N-linked (GlcNAc...) asparagine glycan. Disulfide bonds link C148/C213, C191/C242, and C201/C244.

This sequence belongs to the NGF-beta family.

It localises to the secreted. Functionally, seems to promote the survival of visceral and proprioceptive sensory neurons. The protein is Neurotrophin-3 (NTF3) of Bos taurus (Bovine).